Reading from the N-terminus, the 1807-residue chain is Vitellogenin-2 (1807 aa).

Residues 1 to 16 (MWFPVTLLFLAGVAVA) form the signal peptide. Residues 24–819 (WETGNEYQYS…LIPKYVYVGV (796 aa)) form the Vitellogenin domain. Cys180 and Cys224 are disulfide-bonded. The interval 334-402 (SDSDNRRVRH…SSSSSSEEEN (69 aa)) is disordered. Residues 346 to 397 (VSQNSEQENSSESSKSSSQSSSSSSSASSSSSSSSSSSSSSSSSSSSSSSSS) show a composition bias toward low complexity. N-linked (GlcNAc...) asparagine glycans are attached at residues Asn354, Asn579, Asn635, Asn1181, Asn1304, Asn1373, and Asn1506. In terms of domain architecture, VWFD spans 1448-1636 (QSCTLDKDKV…TYAMTQENCQ (189 aa)). Cystine bridges form between Cys1450/Cys1599 and Cys1472/Cys1635. 2 disordered regions span residues 1635–1655 (CQGPAPENKRRAEQSTCHEFP) and 1684–1723 (NRNKEHGRGNKSHQNNKKQYQANSQESGSSESRNDKKKHN). The N-linked (GlcNAc...) asparagine glycan is linked to Asn1693. The segment covering 1700–1714 (KKQYQANSQESGSSE) has biased composition (polar residues).

Its subcellular location is the secreted. Precursor of the egg-yolk proteins that are sources of nutrients during embryonic development. This Solenopsis invicta (Red imported fire ant) protein is Vitellogenin-2.